Here is a 92-residue protein sequence, read N- to C-terminus: Endoribonuclease HigB (92 aa).

The active site involves H92.

Forms a complex with the antitoxin HigA which inhibits the mRNA interferase activity. The heterodimer dimerizes to form a HigB-(HigA)2-HigB tetramer that is able to bind to the DNA.

Toxic component of a type II toxin-antitoxin (TA) system. A ribosome-associated translation-dependent mRNA interferase. Inhibits translation by sequence-specific cleavage of mRNA. Prefers either in-frame or out-of-frame 5'-AAA-3' codons (lysine). Also cleaves the first three AAAs of stretches of four or more A sequences. 20% of codons containing AA are cleaved and occassionally cuts even at a single A. The sequence is that of Endoribonuclease HigB from Proteus vulgaris.